A 350-amino-acid chain; its full sequence is Glycerol-1-phosphate dehydrogenase [NAD(P)+] (350 aa).

NAD(+)-binding positions include 96 to 100 and 118 to 121; these read GNIID and TAPS. Asp123 lines the substrate pocket. Ser127 serves as a coordination point for NAD(+). Asp170 serves as a coordination point for substrate. Residues Asp170 and His250 each contribute to the Zn(2+) site. His254 contacts substrate. A Zn(2+)-binding site is contributed by His266.

This sequence belongs to the glycerol-1-phosphate dehydrogenase family. Homodimer. Requires Zn(2+) as cofactor.

It is found in the cytoplasm. It catalyses the reaction sn-glycerol 1-phosphate + NAD(+) = dihydroxyacetone phosphate + NADH + H(+). The catalysed reaction is sn-glycerol 1-phosphate + NADP(+) = dihydroxyacetone phosphate + NADPH + H(+). The protein operates within membrane lipid metabolism; glycerophospholipid metabolism. In terms of biological role, catalyzes the NAD(P)H-dependent reduction of dihydroxyacetonephosphate (DHAP or glycerone phosphate) to glycerol 1-phosphate (G1P). The G1P thus generated is used as the glycerophosphate backbone of phospholipids in the cellular membranes of Archaea. The polypeptide is Glycerol-1-phosphate dehydrogenase [NAD(P)+] (Sulfurisphaera tokodaii (strain DSM 16993 / JCM 10545 / NBRC 100140 / 7) (Sulfolobus tokodaii)).